A 333-amino-acid chain; its full sequence is DNA-directed RNA polymerase subunit alpha (333 aa).

Residues 1 to 234 (MQISVNEFLT…QQLAAFVDLK (234 aa)) are alpha N-terminal domain (alpha-NTD). The segment at 248–333 (IDPILLRPVD…SLKKDDKATA (86 aa)) is alpha C-terminal domain (alpha-CTD).

This sequence belongs to the RNA polymerase alpha chain family. In terms of assembly, homodimer. The RNAP catalytic core consists of 2 alpha, 1 beta, 1 beta' and 1 omega subunit. When a sigma factor is associated with the core the holoenzyme is formed, which can initiate transcription.

The catalysed reaction is RNA(n) + a ribonucleoside 5'-triphosphate = RNA(n+1) + diphosphate. Functionally, DNA-dependent RNA polymerase catalyzes the transcription of DNA into RNA using the four ribonucleoside triphosphates as substrates. The chain is DNA-directed RNA polymerase subunit alpha from Ectopseudomonas mendocina (strain ymp) (Pseudomonas mendocina).